We begin with the raw amino-acid sequence, 442 residues long: tRNA modification GTPase MnmE (442 aa).

(6S)-5-formyl-5,6,7,8-tetrahydrofolate-binding residues include R21, E79, and K118. A TrmE-type G domain is found at 215-365 (GLKIAIVGKP…LENKLSSYCN (151 aa)). GTP-binding positions include 225 to 230 (NVGKSS), 244 to 250 (TNEAGTT), and 269 to 272 (DTAG). Mg(2+)-binding residues include S229 and T250. K442 lines the (6S)-5-formyl-5,6,7,8-tetrahydrofolate pocket.

Belongs to the TRAFAC class TrmE-Era-EngA-EngB-Septin-like GTPase superfamily. TrmE GTPase family. As to quaternary structure, homodimer. Heterotetramer of two MnmE and two MnmG subunits. Requires K(+) as cofactor.

It localises to the cytoplasm. Its function is as follows. Exhibits a very high intrinsic GTPase hydrolysis rate. Involved in the addition of a carboxymethylaminomethyl (cmnm) group at the wobble position (U34) of certain tRNAs, forming tRNA-cmnm(5)s(2)U34. The protein is tRNA modification GTPase MnmE of Mycoplasma mobile (strain ATCC 43663 / 163K / NCTC 11711) (Mesomycoplasma mobile).